A 151-amino-acid chain; its full sequence is Ribosome maturation factor RimP (151 aa).

It belongs to the RimP family.

The protein resides in the cytoplasm. Functionally, required for maturation of 30S ribosomal subunits. The chain is Ribosome maturation factor RimP from Mannheimia succiniciproducens (strain KCTC 0769BP / MBEL55E).